A 438-amino-acid polypeptide reads, in one-letter code: Protein SPMIP7 (438 aa).

In terms of tissue distribution, testis-specific.

Essential for normal spermatogenesis. This Homo sapiens (Human) protein is Protein SPMIP7.